We begin with the raw amino-acid sequence, 310 residues long: MTRHGKNSTAASVYTYHERRRDAKASGYGTLHARLGADSIKEFHCCSLTLQPCRNPVISPTGYIFDREAILENILAQKKAYAKKLKEYEKQVAEESAAAKIAEGQAETFTKRTQFSAIESTPSRTGAVATPRPEVGSLKRQGGVMSTEIAAKVKAHGEEGVMSNMKGDKSTSLPSFWIPELNPTAVATKLEKPSSKVLCPVSGKPIKLKELLEVKFTPMPGTETAAHRKFLCPVTRDELTNTTRCAYLKKSKSVVKYDVVEKLIKGDGIDPINGEPMSEDDIIELQRGGTGYSATNETKAKLIRPQLELQ.

Residues 115–124 (FSAIESTPSR) are compositionally biased toward polar residues. The segment at 115–141 (FSAIESTPSRTGAVATPRPEVGSLKRQ) is disordered.

The protein belongs to the NOSIP family.

The protein resides in the cytoplasm. It is found in the nucleus. Negatively regulates nitric oxide production by inducing nitric oxide synthase translocation to actin cytoskeleton and inhibiting its enzymatic activity. This Caenorhabditis elegans protein is Nitric oxide synthase-interacting protein homolog.